Consider the following 113-residue polypeptide: UPF0482 protein KPN78578_15540 (113 aa).

The N-terminal stretch at 1 to 28 (MNMTLNKRWCLTAILALSAVVYTSSSYA) is a signal peptide. The tract at residues 38 to 60 (GDSAQSRQQASMEKEQWNDTRSL) is disordered. Positions 39-48 (DSAQSRQQAS) are enriched in polar residues. The span at 49 to 59 (MEKEQWNDTRS) shows a compositional bias: basic and acidic residues.

Belongs to the UPF0482 family.

The chain is UPF0482 protein KPN78578_15540 from Klebsiella pneumoniae subsp. pneumoniae (strain ATCC 700721 / MGH 78578).